The primary structure comprises 549 residues: Probable protein kinase UbiB (549 aa).

Residues 123–501 (DFDETPLASA…QQQAHKSNYL (379 aa)) form the Protein kinase domain. ATP-binding positions include 129-137 (LASASISQV) and K152. The Proton acceptor role is filled by D287. Helical transmembrane passes span 498–518 (SNYLLITSAILLICGTLLFNQ) and 520–540 (ATLWSPYVCLISGAVLWIIGW).

Belongs to the ABC1 family. UbiB subfamily.

It is found in the cell inner membrane. It participates in cofactor biosynthesis; ubiquinone biosynthesis [regulation]. Is probably a protein kinase regulator of UbiI activity which is involved in aerobic coenzyme Q (ubiquinone) biosynthesis. The polypeptide is Probable protein kinase UbiB (Shewanella sp. (strain ANA-3)).